Here is a 61-residue protein sequence, read N- to C-terminus: Tubulin alpha-4 chain (61 aa).

Residue Gln11 participates in GTP binding. A disordered region spans residues Gln35–Tyr61. N6-acetyllysine is present on Lys40. Positions Ala47–Tyr61 are enriched in acidic residues.

Belongs to the tubulin family. In terms of assembly, dimer of alpha and beta chains. A typical microtubule is a hollow water-filled tube with an outer diameter of 25 nm and an inner diameter of 15 nM. Alpha-beta heterodimers associate head-to-tail to form protofilaments running lengthwise along the microtubule wall with the beta-tubulin subunit facing the microtubule plus end conferring a structural polarity. Microtubules usually have 13 protofilaments but different protofilament numbers can be found in some organisms and specialized cells. Mg(2+) is required as a cofactor. In terms of processing, undergoes a tyrosination/detyrosination cycle, the cyclic removal and re-addition of a C-terminal tyrosine residue by the enzymes tubulin tyrosine carboxypeptidase (TTCP) and tubulin tyrosine ligase (TTL), respectively. Acetylation of alpha chains at Lys-40 stabilizes microtubules and affects affinity and processivity of microtubule motors. This modification has a role in multiple cellular functions, ranging from cell motility, cell cycle progression or cell differentiation to intracellular trafficking and signaling.

Its subcellular location is the cytoplasm. The protein localises to the cytoskeleton. The catalysed reaction is GTP + H2O = GDP + phosphate + H(+). In terms of biological role, tubulin is the major constituent of microtubules, a cylinder consisting of laterally associated linear protofilaments composed of alpha- and beta-tubulin heterodimers. Microtubules grow by the addition of GTP-tubulin dimers to the microtubule end, where a stabilizing cap forms. Below the cap, tubulin dimers are in GDP-bound state, owing to GTPase activity of alpha-tubulin. In Zea mays (Maize), this protein is Tubulin alpha-4 chain (TUBA4).